The following is a 28-amino-acid chain: Metallothionein-like protein type 2 LSC210 (28 aa).

Belongs to the metallothionein superfamily. Type 15 family.

In terms of biological role, metallothioneins have a high content of cysteine residues that bind various heavy metals. This chain is Metallothionein-like protein type 2 LSC210 (LSC210), found in Brassica napus (Rape).